The chain runs to 310 residues: Hydroxyacylglutathione hydrolase, mitochondrial (310 aa).

Zn(2+)-binding residues include histidine 104, histidine 106, aspartate 108, histidine 109, histidine 160, and aspartate 184. Residues 193-195 (KFF), 223-225 (HEY), and 299-302 (RKEK) contribute to the substrate site. Histidine 223 contributes to the Zn(2+) binding site.

Belongs to the metallo-beta-lactamase superfamily. Glyoxalase II family. Monomer. Zn(2+) serves as cofactor.

Its subcellular location is the mitochondrion matrix. It is found in the cytoplasm. The catalysed reaction is an S-(2-hydroxyacyl)glutathione + H2O = a 2-hydroxy carboxylate + glutathione + H(+). It catalyses the reaction (R)-S-lactoylglutathione + H2O = (R)-lactate + glutathione + H(+). In terms of biological role, thiolesterase that catalyzes the hydrolysis of S-D-lactoyl-glutathione to form glutathione and D-lactic acid. This chain is Hydroxyacylglutathione hydrolase, mitochondrial (HAGH), found in Gallus gallus (Chicken).